The sequence spans 190 residues: LOB domain-containing protein 1 (190 aa).

Polar residues predominate over residues 1-11; that stretch reads MESKSDASVAT. The disordered stretch occupies residues 1 to 27; it reads MESKSDASVATTPIISSSSSPPPSLSP. The region spanning 32 to 133 is the LOB domain; the sequence is SPCAACKILR…AQLAKAQVEM (102 aa).

The protein belongs to the LOB domain-containing protein family. In terms of tissue distribution, expressed in young shoots, roots, stems, leaves and flowers.

The protein is LOB domain-containing protein 1 (LBD1) of Arabidopsis thaliana (Mouse-ear cress).